Here is a 268-residue protein sequence, read N- to C-terminus: uncharacterized protein (268 aa).

Residues 132 to 159 (DELDEKIIEFDTKMNEILEELLEDVEVE) adopt a coiled-coil conformation.

This is an uncharacterized protein from Methanocaldococcus jannaschii (strain ATCC 43067 / DSM 2661 / JAL-1 / JCM 10045 / NBRC 100440) (Methanococcus jannaschii).